A 208-amino-acid chain; its full sequence is N-(5'-phosphoribosyl)anthranilate isomerase (208 aa).

It belongs to the TrpF family.

The enzyme catalyses N-(5-phospho-beta-D-ribosyl)anthranilate = 1-(2-carboxyphenylamino)-1-deoxy-D-ribulose 5-phosphate. It functions in the pathway amino-acid biosynthesis; L-tryptophan biosynthesis; L-tryptophan from chorismate: step 3/5. The protein is N-(5'-phosphoribosyl)anthranilate isomerase of Neisseria gonorrhoeae (strain ATCC 700825 / FA 1090).